Consider the following 203-residue polypeptide: RNA annealing protein YRA2 (203 aa).

Residue Met-1 is modified to N-acetylmethionine. Disordered regions lie at residues 1–60 and 137–203; these read MDKA…REEP and QPQR…YMKG. Residues 11-20 are compositionally biased toward polar residues; the sequence is NSHTDSSSNH. Residues 47–60 are compositionally biased toward basic and acidic residues; sequence SRSKDRLYREREEP. The region spanning 64-138 is the RRM domain; the sequence is KRIRISKIPL…AKIEVEIYQP (75 aa). Basic residues-rich tracts occupy residues 139–153 and 161–180; these read QRKHSRMNAHNRRKQ and GRPGSHYRQKPNRVSKKNKG.

This sequence belongs to the YRA1 family. Associates with mRNPs. Interacts with YRA1.

The protein resides in the nucleus. Its function is as follows. Involved in export of poly(A) mRNAs from the nucleus. Recruited to the coding sequences as well as poly-A sites of active genes. This Saccharomyces cerevisiae (strain JAY291) (Baker's yeast) protein is RNA annealing protein YRA2 (YRA2).